Here is a 274-residue protein sequence, read N- to C-terminus: Large ribosomal subunit protein uL2cz/uL2cy (274 aa).

Disordered stretches follow at residues M1–N25 and N224–K274.

Belongs to the universal ribosomal protein uL2 family. As to quaternary structure, part of the 50S ribosomal subunit.

The protein localises to the plastid. The protein resides in the chloroplast. This Cucumis sativus (Cucumber) protein is Large ribosomal subunit protein uL2cz/uL2cy (rpl2-A).